The primary structure comprises 902 residues: Ribonuclease E (902 aa).

The region spanning 39–119 (SNIYKGKITR…GTKGAALTTF (81 aa)) is the S1 motif domain. Aspartate 303 and aspartate 346 together coordinate Mg(2+). Positions 404 and 407 each coordinate Zn(2+). Residues 404–407 (CPRC) form a required for zinc-mediated homotetramerization and catalytic activity region. The disordered stretch occupies residues 881 to 902 (GKNSAGVHSATNFSNSPVSKLK). Residues 889–902 (SATNFSNSPVSKLK) are compositionally biased toward polar residues.

It belongs to the RNase E/G family. RNase E subfamily. As to quaternary structure, component of the RNA degradosome, which is a multiprotein complex involved in RNA processing and mRNA degradation. Within the RNA degradosome, RNase E assembles into a homotetramer formed by a dimer of dimers. Zn(2+) serves as cofactor. It depends on Mg(2+) as a cofactor.

The protein localises to the cytoplasm. The protein resides in the cell inner membrane. It carries out the reaction Endonucleolytic cleavage of single-stranded RNA in A- and U-rich regions.. Its function is as follows. Endoribonuclease that plays a central role in RNA processing and decay. Required for the maturation of 5S and 16S rRNAs and the majority of tRNAs. Also involved in the degradation of most mRNAs. In Buchnera aphidicola subsp. Acyrthosiphon pisum (strain APS) (Acyrthosiphon pisum symbiotic bacterium), this protein is Ribonuclease E.